A 375-amino-acid polypeptide reads, in one-letter code: Metal tolerance protein B (375 aa).

The Cytoplasmic portion of the chain corresponds to 1-57 (MELEQICILKPDDEEEMESPSPSKTEENLGVVPLSCAFTRQEHCVSETKEREESTRR). A helical membrane pass occupies residues 58–78 (LSSLIFLYLIVMSVQIVGGFK). The Vacuolar portion of the chain corresponds to 79–84 (ANSLAV). Residues 85–105 (MTDAAHLLSDVAGLCVSLLAI) form a helical membrane-spanning segment. Over 106-122 (KVSSWEANPRNSFGFKR) the chain is Cytoplasmic. A helical membrane pass occupies residues 123 to 143 (LEVLAAFLSVQLIWLVSGVII). The Vacuolar portion of the chain corresponds to 144–160 (HEAIQRLLSRSREVNGE). A helical membrane pass occupies residues 161–181 (IMFGISAFGFFMNLVMVLWLG). A required for zinc-binding region spans residues 182-206 (HNHSHHHHDHHHHHHNHKHQHQHHH). The Cytoplasmic segment spans residues 182–240 (HNHSHHHHDHHHHHHNHKHQHQHHHKEVVAEEEEEEMNPLKGEKSSSKEMNINIQGAYL). A helical membrane pass occupies residues 241 to 261 (HAMADMIQSLGVMIGGGIIWV). Residues 262-264 (KPK) are Vacuolar-facing. A helical membrane pass occupies residues 265–285 (WVLVDLICTLVFSAFALAATL). The Cytoplasmic portion of the chain corresponds to 286–375 (PILKNIFGIL…YHATVQVESE (90 aa)).

This sequence belongs to the cation diffusion facilitator (CDF) transporter (TC 2.A.4) family. SLC30A subfamily.

It is found in the vacuole membrane. Its function is as follows. Involved in sequestration of excess zinc in the cytoplasm into vacuoles to maintain zinc homeostasis. This chain is Metal tolerance protein B (MTPB), found in Arabidopsis thaliana (Mouse-ear cress).